We begin with the raw amino-acid sequence, 353 residues long: uncharacterized protein (353 aa).

This is an uncharacterized protein from Caenorhabditis elegans.